The chain runs to 542 residues: Beta-amylase 2, chloroplastic (542 aa).

The N-terminal 55 residues, 1–55 (MAIRLNHSVIPVSVKLGAPTRVSARSSLPFSVGDWRGVSTFSGARPLVLAKVKLR), are a transit peptide targeting the chloroplast. 3 residues coordinate substrate: Asp-136, His-176, and Asp-184. Catalysis depends on Glu-269, which acts as the Proton donor. Substrate contacts are provided by Lys-377, His-382, and Thr-424. The active-site Proton acceptor is Glu-465. Residues 466–467 (NA) and Arg-501 contribute to the substrate site.

It belongs to the glycosyl hydrolase 14 family.

The protein resides in the plastid. Its subcellular location is the chloroplast. It carries out the reaction Hydrolysis of (1-&gt;4)-alpha-D-glucosidic linkages in polysaccharides so as to remove successive maltose units from the non-reducing ends of the chains.. With respect to regulation, redox regulation; active in reducing conditions, inactive in oxidizing conditions. Functionally, low beta-amylase activity. Interacts poorly with starch or other alpha-1,4-glucan. This Arabidopsis thaliana (Mouse-ear cress) protein is Beta-amylase 2, chloroplastic (BAM2).